The chain runs to 274 residues: NH(3)-dependent NAD(+) synthetase (274 aa).

46–53 (GISGGQDS) serves as a coordination point for ATP. D52 lines the Mg(2+) pocket. Deamido-NAD(+) is bound at residue R140. T160 serves as a coordination point for ATP. Residue E165 participates in Mg(2+) binding. 2 residues coordinate deamido-NAD(+): K173 and D180. ATP is bound by residues K189 and T211. A deamido-NAD(+)-binding site is contributed by 260–261 (HK).

The protein belongs to the NAD synthetase family. In terms of assembly, homodimer.

The catalysed reaction is deamido-NAD(+) + NH4(+) + ATP = AMP + diphosphate + NAD(+) + H(+). Its pathway is cofactor biosynthesis; NAD(+) biosynthesis; NAD(+) from deamido-NAD(+) (ammonia route): step 1/1. Catalyzes the ATP-dependent amidation of deamido-NAD to form NAD. Uses ammonia as a nitrogen source. The sequence is that of NH(3)-dependent NAD(+) synthetase from Lactococcus lactis subsp. lactis (strain IL1403) (Streptococcus lactis).